Consider the following 305-residue polypeptide: MTPQELQSILSHGLLSFPVTDFDAQGDFNPAGYVKRLEWLAPYGASALFAAGGTGEFFSLAASEYSQVIKTAVDTCATSVPILAGVGGSTRQAIEYAKEAERLGAKGLLLLPHYLTEASQDGVAAHVEAVCKAVNIGVVVYNRNVCRLNADLLERLAERCPNLIGYKDGLGDIELMVSIRRRLGDRFSYLGGLPTAEVYAAAYKALGVPVYSSAVFNFVPKTAMDFYHAIARDDHATVAKLIDDFFLPYLDIRNRKAGYAVSIVKAGARIAGYDAGPVRTPLTDLTAQEYEMLAALMDKMGPQTV.

The protein belongs to the DapA family.

It carries out the reaction 5-dehydro-4-deoxy-D-glucarate + H(+) = 2,5-dioxopentanoate + CO2 + H2O. Its pathway is carbohydrate acid metabolism; D-glucarate degradation; 2,5-dioxopentanoate from D-glucarate: step 2/2. The chain is Probable 5-dehydro-4-deoxyglucarate dehydratase from Pseudomonas entomophila (strain L48).